The primary structure comprises 166 residues: NADPH-dependent 7-cyano-7-deazaguanine reductase (166 aa).

C57 acts as the Thioimide intermediate in catalysis. D64 functions as the Proton donor in the catalytic mechanism. Substrate-binding positions include 79–81 and 98–99; these read VES and HE.

The protein belongs to the GTP cyclohydrolase I family. QueF type 1 subfamily.

The protein localises to the cytoplasm. The catalysed reaction is 7-aminomethyl-7-carbaguanine + 2 NADP(+) = 7-cyano-7-deazaguanine + 2 NADPH + 3 H(+). It functions in the pathway tRNA modification; tRNA-queuosine biosynthesis. Its function is as follows. Catalyzes the NADPH-dependent reduction of 7-cyano-7-deazaguanine (preQ0) to 7-aminomethyl-7-deazaguanine (preQ1). The protein is NADPH-dependent 7-cyano-7-deazaguanine reductase of Alkaliphilus metalliredigens (strain QYMF).